The primary structure comprises 213 residues: MGRLSAEEGALLVRLARRAVEEYLENARVIEPPRDTPPSLREKSGVFVTIEKILVDPLARRARRELRGCIGYPEPVLPLAEATIHAAIAAATEDPRFPPMTPRELDTVVFEVSVLTKPEPVDYRSPEELPDKIKVGRDGLIVEYGAARGLLLPQVAVDEGWDPEEFLSYACLKAGLRDDAWRHGGLKVYRFQAQIFVETTPKGDVVERFLEVV.

Residues 7-207 (EEGALLVRLA…ETTPKGDVVE (201 aa)) form the AMMECR1 domain.

In Thermofilum pendens (strain DSM 2475 / Hrk 5), this protein is Protein Tpen_0748.